A 400-amino-acid polypeptide reads, in one-letter code: Elongation factor Tu (400 aa).

A tr-type G domain is found at 10 to 209; that stretch reads KPHVNIGTIG…NVDAYIPTPE (200 aa). Residues 19–26 are G1; that stretch reads GHVDHGKT. 19–26 is a binding site for GTP; the sequence is GHVDHGKT. Residue Thr26 coordinates Mg(2+). The G2 stretch occupies residues 60–64; it reads GITIN. Positions 81 to 84 are G3; sequence DCPG. GTP is bound by residues 81–85 and 136–139; these read DCPGH and NKSD. The segment at 136-139 is G4; sequence NKSD. Positions 174 to 176 are G5; that stretch reads SGL.

The protein belongs to the TRAFAC class translation factor GTPase superfamily. Classic translation factor GTPase family. EF-Tu/EF-1A subfamily. Monomer.

The protein resides in the cytoplasm. The catalysed reaction is GTP + H2O = GDP + phosphate + H(+). GTP hydrolase that promotes the GTP-dependent binding of aminoacyl-tRNA to the A-site of ribosomes during protein biosynthesis. This Desulforamulus reducens (strain ATCC BAA-1160 / DSM 100696 / MI-1) (Desulfotomaculum reducens) protein is Elongation factor Tu.